The following is a 497-amino-acid chain: Glycerol kinase (497 aa).

Residue Thr12 coordinates ADP. Residues Thr12, Thr13, and Ser14 each contribute to the ATP site. Residue Thr12 participates in sn-glycerol 3-phosphate binding. Residue Arg16 participates in ADP binding. Sn-glycerol 3-phosphate is bound by residues Arg82, Glu83, Tyr134, and Asp243. 5 residues coordinate glycerol: Arg82, Glu83, Tyr134, Asp243, and Gln244. 2 residues coordinate ADP: Thr265 and Gly308. ATP is bound by residues Thr265, Gly308, Gln312, and Gly411. An ADP-binding site is contributed by Gly411.

Belongs to the FGGY kinase family.

The catalysed reaction is glycerol + ATP = sn-glycerol 3-phosphate + ADP + H(+). Its pathway is polyol metabolism; glycerol degradation via glycerol kinase pathway; sn-glycerol 3-phosphate from glycerol: step 1/1. Inhibited by fructose 1,6-bisphosphate (FBP). Functionally, key enzyme in the regulation of glycerol uptake and metabolism. Catalyzes the phosphorylation of glycerol to yield sn-glycerol 3-phosphate. This is Glycerol kinase from Rhizobium meliloti (strain 1021) (Ensifer meliloti).